The chain runs to 352 residues: Ketoisovalerate oxidoreductase subunit VorB (352 aa).

Heterotrimer of the VorA, VorB and VorC subunits.

It carries out the reaction 3-methyl-2-oxobutanoate + 2 oxidized [2Fe-2S]-[ferredoxin] + CoA = 2-methylpropanoyl-CoA + 2 reduced [2Fe-2S]-[ferredoxin] + CO2 + H(+). The chain is Ketoisovalerate oxidoreductase subunit VorB (vorB) from Methanothermobacter thermautotrophicus (strain ATCC 29096 / DSM 1053 / JCM 10044 / NBRC 100330 / Delta H) (Methanobacterium thermoautotrophicum).